A 20-amino-acid polypeptide reads, in one-letter code: Magnificalysin I (20 aa).

The interval 1-10 (ALAGTIIAGA) is plays an important role in the hemolytic activity. Positions 9-20 (GASLTFKILDEV) are N-terminal region.

This sequence belongs to the actinoporin family. Sea anemone subfamily. Octamer or nonamer in membranes. Monomer in the soluble state.

The protein localises to the secreted. It localises to the nematocyst. Its subcellular location is the target cell membrane. In terms of biological role, pore-forming protein that forms cations-selective hydrophilic pores of around 1 nm and causes cytolysis. Pore formation is a multi-step process that involves specific recognition of membrane sphingomyelin (but neither cholesterol nor phosphatidylcholine) using aromatic rich region and adjacent phosphocholine (POC) binding site, firm binding to the membrane (mainly driven by hydrophobic interactions) accompanied by the transfer of the N-terminal region to the lipid-water interface and finally pore formation after oligomerization of monomers. The protein is Magnificalysin I of Heteractis magnifica (Magnificent sea anemone).